The chain runs to 639 residues: Polyphenol oxidase, chloroplastic (639 aa).

Residues 1–101 constitute a chloroplast transit peptide; that stretch reads MATLSSPTII…EGANYYNTLA (101 aa). The tract at residues 35–58 is disordered; sequence GVRSVNGKVSCQTKNNNGNDENNQ. Disulfide bonds link C111–C127 and C126–C194. Cu cation-binding residues include H193, H214, H223, H354, H358, and H388. Positions 197–214 form a cross-link, 2'-(S-cysteinyl)-histidine (Cys-His); it reads CDGSYPVLGHNDTRLEVH.

The protein belongs to the tyrosinase family. Requires Cu(2+) as cofactor.

The protein resides in the plastid. The protein localises to the chloroplast thylakoid lumen. It catalyses the reaction 2 catechol + O2 = 2 1,2-benzoquinone + 2 H2O. Functionally, catalyzes the oxidation of mono- and o-diphenols to o-diquinones. This chain is Polyphenol oxidase, chloroplastic, found in Spinacia oleracea (Spinach).